An 89-amino-acid polypeptide reads, in one-letter code: Small ribosomal subunit protein bS18 (89 aa).

Belongs to the bacterial ribosomal protein bS18 family. In terms of assembly, part of the 30S ribosomal subunit. Forms a tight heterodimer with protein bS6.

Functionally, binds as a heterodimer with protein bS6 to the central domain of the 16S rRNA, where it helps stabilize the platform of the 30S subunit. In Bdellovibrio bacteriovorus (strain ATCC 15356 / DSM 50701 / NCIMB 9529 / HD100), this protein is Small ribosomal subunit protein bS18.